The chain runs to 781 residues: Mitogen-activated protein kinase 7 (781 aa).

Residues 1–27 (MAEPLKEDDGEDGSGEPPGPVKAEPAG) form a disordered region. Alanine 2 is subject to N-acetylalanine. The segment at 2-77 (AEPLKEDDGE…VVSSARRRLT (76 aa)) is required for cytoplasmic targeting. The 293-residue stretch at 55–347 (YEIIETIGNG…AAAALRHPFL (293 aa)) folds into the Protein kinase domain. ATP-binding positions include 61–69 (IGNGAYGVV) and lysine 84. The tract at residues 78 to 139 (GQQVAIKKIP…FKSVYVVLDL (62 aa)) is required for binding to MAP2K5. The necessary for oligomerization stretch occupies residues 140–406 (MESDLHQIIH…QQIRFQPSLQ (267 aa)). Aspartate 182 serves as the catalytic Proton acceptor. The short motif at 219–221 (TEY) is the TXY element. Residues 402-708 (QPSLQPVASE…PKGSGAGYGV (307 aa)) form a disordered region. The interval 407-781 (PVASEPGCPD…LADLPDLQEP (375 aa)) is may not be required for kinase activity; required to stimulate MEF2C activity. 2 stretches are compositionally biased toward pro residues: residues 433-445 (SPPPAPLPCPGPA) and 454-463 (QPPPPASEPA). Low complexity predominate over residues 476 to 486 (KAALKAALLKS). Basic and acidic residues-rich tracts occupy residues 502–519 (PEPRKPVTAQERQREREE), 527–544 (RAKEREKRRQERERKERG), and 563–573 (DNDRSLLERWT). The Nuclear localization signal motif lies at 505 to 539 (RKPVTAQERQREREEKRRRRQERAKEREKRRQERE). 2 stretches are compositionally biased toward pro residues: residues 578-594 (PPAPAPATARPPSPPAG) and 601-614 (GPLPQPACPPPAPA). Composition is skewed to low complexity over residues 615-632 (AGPAAPQTTAASGLLAPQ) and 642-652 (GPSALSVLPYF). Over residues 653-664 (PSGPPPPDPGGA) the composition is skewed to pro residues. Positions 668 to 685 (STSESPDVTLVTQQLSKS) are enriched in polar residues. Serine 685 is subject to Phosphoserine. Residue threonine 698 is modified to Phosphothreonine.

Belongs to the protein kinase superfamily. CMGC Ser/Thr protein kinase family. MAP kinase subfamily. As to quaternary structure, interacts with MAP2K5. Forms oligomers. Interacts with MEF2A, MEF2C and MEF2D; the interaction phosphorylates the MEF2s and enhances transcriptional activity of MEF2A, MEF2C but not MEF2D. Interacts with SGK1. Interacts with PML. Interacts (via N-terminal half) with HSP90AB1-CDC37 chaperone complex in resting cells; the interaction is MAP2K5-independent and prevents MAPK7 from ubiquitination and proteasomal degradation. Interacts with STUB1/CHIP; the interaction is enhanced in the presence of IGF1 or MAP2K5 and promotes STUB1/CHIP E3 ligase activity. Requires Mg(2+) as cofactor. In terms of processing, dually phosphorylated on Thr-219 and Tyr-221, which activates the enzyme.

It is found in the cytoplasm. Its subcellular location is the nucleus. The protein resides in the PML body. The catalysed reaction is L-seryl-[protein] + ATP = O-phospho-L-seryl-[protein] + ADP + H(+). It carries out the reaction L-threonyl-[protein] + ATP = O-phospho-L-threonyl-[protein] + ADP + H(+). With respect to regulation, activated by tyrosine and threonine phosphorylation. Activated in response to hyperosmolarity, hydrogen peroxide, and epidermal growth factor (EGF). Plays a role in various cellular processes such as proliferation, differentiation and cell survival. The upstream activator of MAPK7 is the MAPK kinase MAP2K5. Upon activation, it translocates to the nucleus and phosphorylates various downstream targets including MEF2C. EGF activates MAPK7 through a Ras-independent and MAP2K5-dependent pathway. As part of the MAPK/ERK signaling pathway, acts as a negative regulator of apoptosis in cardiomyocytes via interaction with STUB1/CHIP and promotion of STUB1-mediated ubiquitination and degradation of ICER-type isoforms of CREM. May have a role in muscle cell differentiation. May be important for endothelial function and maintenance of blood vessel integrity. MAP2K5 and MAPK7 interact specifically with one another and not with MEK1/ERK1 or MEK2/ERK2 pathways. Phosphorylates SGK1 at Ser-78 and this is required for growth factor-induced cell cycle progression. Involved in the regulation of p53/TP53 by disrupting the PML-MDM2 interaction. The protein is Mitogen-activated protein kinase 7 (MAPK7) of Bos taurus (Bovine).